The chain runs to 352 residues: S-adenosylmethionine:tRNA ribosyltransferase-isomerase (352 aa).

This sequence belongs to the QueA family. As to quaternary structure, monomer.

The protein localises to the cytoplasm. It carries out the reaction 7-aminomethyl-7-carbaguanosine(34) in tRNA + S-adenosyl-L-methionine = epoxyqueuosine(34) in tRNA + adenine + L-methionine + 2 H(+). It functions in the pathway tRNA modification; tRNA-queuosine biosynthesis. Functionally, transfers and isomerizes the ribose moiety from AdoMet to the 7-aminomethyl group of 7-deazaguanine (preQ1-tRNA) to give epoxyqueuosine (oQ-tRNA). The chain is S-adenosylmethionine:tRNA ribosyltransferase-isomerase from Allorhizobium ampelinum (strain ATCC BAA-846 / DSM 112012 / S4) (Agrobacterium vitis (strain S4)).